The primary structure comprises 394 residues: Elongation factor Tu (394 aa).

The 195-residue stretch at 10 to 204 folds into the tr-type G domain; it reads KPHVNVGTIG…ALDTYIPEPE (195 aa). Positions 19–26 are G1; that stretch reads GHVDHGKT. 19–26 contacts GTP; it reads GHVDHGKT. Residue Thr26 coordinates Mg(2+). The interval 60 to 64 is G2; sequence GITIN. The segment at 81–84 is G3; sequence DCPG. Residues 81–85 and 136–139 contribute to the GTP site; these read DCPGH and NKCD. The tract at residues 136-139 is G4; that stretch reads NKCD. Positions 174–176 are G5; the sequence is SAL.

This sequence belongs to the TRAFAC class translation factor GTPase superfamily. Classic translation factor GTPase family. EF-Tu/EF-1A subfamily. Monomer.

It localises to the cytoplasm. It carries out the reaction GTP + H2O = GDP + phosphate + H(+). GTP hydrolase that promotes the GTP-dependent binding of aminoacyl-tRNA to the A-site of ribosomes during protein biosynthesis. This is Elongation factor Tu from Shewanella pealeana (strain ATCC 700345 / ANG-SQ1).